The chain runs to 435 residues: Kynurenine--oxoglutarate transaminase (435 aa).

The substrate site is built by Gly-46 and Asn-198. Lys-262 carries the post-translational modification N6-(pyridoxal phosphate)lysine. Residue Arg-413 coordinates substrate.

The protein belongs to the class-I pyridoxal-phosphate-dependent aminotransferase family. Homodimer. Pyridoxal 5'-phosphate is required as a cofactor.

It localises to the cytoplasm. It carries out the reaction L-kynurenine + 2-oxoglutarate = kynurenate + L-glutamate + H2O. The catalysed reaction is 3-phenylpyruvate + L-glutamine = 2-oxoglutaramate + L-phenylalanine. It catalyses the reaction an S-substituted L-cysteine + H2O = a thiol + pyruvate + NH4(+). Its pathway is amino-acid degradation; L-kynurenine degradation; kynurenate from L-kynurenine: step 1/2. Catalyzes the irreversible transamination of the L-tryptophan metabolite L-kynurenine to form kynurenic acid (KA). Metabolizes the cysteine conjugates of certain halogenated alkenes and alkanes to form reactive metabolites. Catalyzes the beta-elimination of S-conjugates and Se-conjugates of L-(seleno)cysteine, resulting in the cleavage of the C-S or C-Se bond. The protein is Kynurenine--oxoglutarate transaminase (ccbl) of Dictyostelium discoideum (Social amoeba).